Reading from the N-terminus, the 549-residue chain is Hydroxylamine reductase (549 aa).

[4Fe-4S] cluster-binding residues include C5, C8, C17, and C23. Hybrid [4Fe-2O-2S] cluster-binding residues include H243, E267, C311, C403, C431, C456, E491, and K493. C403 carries the cysteine persulfide modification.

The protein belongs to the HCP family. It depends on [4Fe-4S] cluster as a cofactor. Hybrid [4Fe-2O-2S] cluster is required as a cofactor.

Its subcellular location is the cytoplasm. It catalyses the reaction A + NH4(+) + H2O = hydroxylamine + AH2 + H(+). In terms of biological role, catalyzes the reduction of hydroxylamine to form NH(3) and H(2)O. The protein is Hydroxylamine reductase of Desulfitobacterium hafniense (strain DSM 10664 / DCB-2).